Consider the following 397-residue polypeptide: Ribosomal RNA large subunit methyltransferase I (397 aa).

Positions 2-79 (TAAIYLVKGR…KEEINKAFFV (78 aa)) constitute a PUA domain.

The protein belongs to the methyltransferase superfamily. RlmI family.

It localises to the cytoplasm. The enzyme catalyses cytidine(1962) in 23S rRNA + S-adenosyl-L-methionine = 5-methylcytidine(1962) in 23S rRNA + S-adenosyl-L-homocysteine + H(+). Specifically methylates the cytosine at position 1962 (m5C1962) of 23S rRNA. This Vibrio campbellii (strain ATCC BAA-1116) protein is Ribosomal RNA large subunit methyltransferase I.